The following is a 176-amino-acid chain: NAD(P)H-quinone oxidoreductase subunit 6, chloroplastic (176 aa).

The next 5 membrane-spanning stretches (helical) occupy residues 10 to 30 (FLLVFLGSGLIVGGLGVVLLT), 32 to 52 (PIFSAFSLGLVLVCISLFFSL), 61 to 81 (AQLLIYVGAINVLILFAVMFM), 92 to 112 (LWTVGDGITSLVCTSIFISLI), and 152 to 172 (FFLPFELISIILLVSLIGAIA).

It belongs to the complex I subunit 6 family. In terms of assembly, NDH is composed of at least 16 different subunits, 5 of which are encoded in the nucleus.

The protein resides in the plastid. It localises to the chloroplast thylakoid membrane. The catalysed reaction is a plastoquinone + NADH + (n+1) H(+)(in) = a plastoquinol + NAD(+) + n H(+)(out). It carries out the reaction a plastoquinone + NADPH + (n+1) H(+)(in) = a plastoquinol + NADP(+) + n H(+)(out). In terms of biological role, NDH shuttles electrons from NAD(P)H:plastoquinone, via FMN and iron-sulfur (Fe-S) centers, to quinones in the photosynthetic chain and possibly in a chloroplast respiratory chain. The immediate electron acceptor for the enzyme in this species is believed to be plastoquinone. Couples the redox reaction to proton translocation, and thus conserves the redox energy in a proton gradient. The sequence is that of NAD(P)H-quinone oxidoreductase subunit 6, chloroplastic (ndhG) from Oenothera argillicola (Appalachian evening primrose).